Consider the following 233-residue polypeptide: Small ribosomal subunit protein uS3 (233 aa).

In terms of domain architecture, KH type-2 spans 39 to 107 (VRKYLTKELE…PAQINIAEVR (69 aa)). Residues 214–233 (VEQPEKPSAQPKKQQRKGRK) form a disordered region.

This sequence belongs to the universal ribosomal protein uS3 family. As to quaternary structure, part of the 30S ribosomal subunit. Forms a tight complex with proteins S10 and S14.

Its function is as follows. Binds the lower part of the 30S subunit head. Binds mRNA in the 70S ribosome, positioning it for translation. The sequence is that of Small ribosomal subunit protein uS3 from Pectobacterium atrosepticum (strain SCRI 1043 / ATCC BAA-672) (Erwinia carotovora subsp. atroseptica).